The sequence spans 346 residues: N-acetyl-gamma-glutamyl-phosphate reductase (346 aa).

Cys150 is a catalytic residue.

Belongs to the NAGSA dehydrogenase family. Type 1 subfamily.

It is found in the cytoplasm. It carries out the reaction N-acetyl-L-glutamate 5-semialdehyde + phosphate + NADP(+) = N-acetyl-L-glutamyl 5-phosphate + NADPH + H(+). It functions in the pathway amino-acid biosynthesis; L-arginine biosynthesis; N(2)-acetyl-L-ornithine from L-glutamate: step 3/4. Catalyzes the NADPH-dependent reduction of N-acetyl-5-glutamyl phosphate to yield N-acetyl-L-glutamate 5-semialdehyde. This is N-acetyl-gamma-glutamyl-phosphate reductase from Alkaliphilus metalliredigens (strain QYMF).